A 324-amino-acid polypeptide reads, in one-letter code: Aprataxin (324 aa).

The 50-residue stretch at 23–72 folds into the FHA-like domain; that stretch reads SVTLGRGPDTKIKDKKCSREQVELRADCNRGFVTVKQLGVNPTLVDDVVV. A disordered region spans residues 100–160; it reads TEDTSRSKPS…QGLKASMQDP (61 aa). The span at 111–125 shows a compositional bias: polar residues; sequence RAQQIQSPTKTTADV. Positions 150–255 constitute an HIT domain; the sequence is SQGLKASMQD…ISQDFDSPCL (106 aa). Interaction with DNA substrate regions lie at residues 175 to 179 and 237 to 238; these read DKYPK and SM. Residues 240-244 carry the Histidine triad motif motif; it reads HVHLH. His242 functions as the Tele-AMP-histidine intermediate in the catalytic mechanism. The C2H2-type zinc finger occupies 299-321; the sequence is LRCHVCGKEQTTIPKLKDHLKTH.

It is found in the nucleus. It localises to the nucleoplasm. The protein localises to the nucleolus. It catalyses the reaction a 5'-end adenosine-5'-diphospho-5'-2'-deoxyribonucleoside-DNA + H2O = a 5'-end 5'-phospho-2'-deoxyribonucleoside-DNA + AMP + 2 H(+). The catalysed reaction is a 5'-end adenosine-5'-diphospho-5'-ribonucleoside-2'-deoxyribonucleotide-DNA + H2O = a 5'-end 5'-phospho-ribonucleoside-2'-deoxyribonucleotide-DNA + AMP + 2 H(+). The enzyme catalyses a 3'-end 2'-deoxyribonucleotide-3'-diphospho-5'-guanosine-DNA + H2O = a 3'-end 2'-deoxyribonucleotide 3'-phosphate-DNA + GMP + 2 H(+). Its function is as follows. DNA-binding protein involved in single-strand DNA break repair, double-strand DNA break repair and base excision repair. Resolves abortive DNA ligation intermediates formed either at base excision sites, or when DNA ligases attempt to repair non-ligatable breaks induced by reactive oxygen species. Catalyzes the release of adenylate groups covalently linked to 5'-phosphate termini, resulting in the production of 5'-phosphate termini that can be efficiently rejoined. Also able to hydrolyze adenosine 5'-monophosphoramidate (AMP-NH(2)) and diadenosine tetraphosphate (AppppA), but with lower catalytic activity. Likewise, catalyzes the release of 3'-linked guanosine (DNAppG) and inosine (DNAppI) from DNA, but has higher specific activity with 5'-linked adenosine (AppDNA). This chain is Aprataxin (aptx), found in Danio rerio (Zebrafish).